The sequence spans 311 residues: Methionyl-tRNA formyltransferase (311 aa).

110–113 provides a ligand contact to (6S)-5,6,7,8-tetrahydrofolate; it reads SLLP.

This sequence belongs to the Fmt family.

The enzyme catalyses L-methionyl-tRNA(fMet) + (6R)-10-formyltetrahydrofolate = N-formyl-L-methionyl-tRNA(fMet) + (6S)-5,6,7,8-tetrahydrofolate + H(+). Attaches a formyl group to the free amino group of methionyl-tRNA(fMet). The formyl group appears to play a dual role in the initiator identity of N-formylmethionyl-tRNA by promoting its recognition by IF2 and preventing the misappropriation of this tRNA by the elongation apparatus. The chain is Methionyl-tRNA formyltransferase from Streptococcus agalactiae serotype Ia (strain ATCC 27591 / A909 / CDC SS700).